The chain runs to 3646 residues: Platelet adherence protein A (3646 aa).

The signal sequence occupies residues 1 to 33 (MKDFLKKVLILFTVLLMSMPSSVLNLGTSVVRA). The segment at 34 to 359 (DDPLNIETRR…KNVSFYVNEQ (326 aa)) is does not bind platelets. Positions 34-690 (DDPLNIETRR…NQDAHAKTKD (657 aa)) are F2, binds platelets, fibronectin, vitronectin, salivary pellicle, causes ADP secretion by dense granules. The segment at 34 to 1328 (DDPLNIETRR…KFVLSDTLEE (1295 aa)) is binds platelets. The VWFA domain occupies 75–373 (DLVILQDASG…VFSQKILESV (299 aa)). The Integrin-like recognition motif NGR motif lies at 214 to 216 (NGR). Residues 416-418 (RGT) carry the Integrin-like recognition motif RGT motif. The segment at 439-466 (KNSFDYDLSKEARAPETDEDSEVDPPEN) is disordered. Residues 445-454 (DLSKEARAPE) show a composition bias toward basic and acidic residues. The Integrin-like recognition motif AGD motif lies at 485 to 487 (AGD). Residues 709-3205 (TEVDKKVNEK…TVPNKATIAF (2497 aa)) form a central region with RrgB repeats region. 2 stretches are compositionally biased toward basic and acidic residues: residues 1124–1135 (KDKNDHKGEKET) and 1563–1573 (DHNPKFHKDSN). Disordered regions lie at residues 1124 to 1153 (KDKNDHKGEKETIPVTVTPPTEPNVSKKIN), 1563 to 1589 (DHNPKFHKDSNEVPVTPPSPEQPPIEK), 2011 to 2036 (FNNDPGTEQSSKPVPVIPPTPTEPEL), 2170 to 2198 (EKDSNIVPVTPPSPENPPVEKKVNNKPSA), 2320 to 2343 (KTEKSTEPVPVIPPSPEEPGIKKE), 2467 to 2492 (PNRPEIHKDSNRVPVTPPTPEEPEIK), 2611 to 2644 (ASYRVDFPNNPGVTKDSNEVPVTPPSPENPPIEK), 2767 to 2792 (FNNDPGTEQSSKPVPVIPPTPTEPEL), 2916 to 2948 (PNKPAVTKDSNEVPVTPPSPEQPPIEKDVNSKP), 3202 to 3252 (TIAF…NPST), 3371 to 3412 (AAAK…AALE), and 3550 to 3618 (NDKP…PKTG). Polar residues predominate over residues 2011–2022 (FNNDPGTEQSSK). The span at 2767–2778 (FNNDPGTEQSSK) shows a compositional bias: polar residues. The span at 3210–3220 (GKNGTKESNPV) shows a compositional bias: polar residues. Positions 3223 to 3237 (RPRDPEKPEEPKPNE) are enriched in basic and acidic residues. Coiled coils occupy residues 3326–3376 (IAKI…AKEK) and 3408–3475 (VAAL…VNDK). The span at 3371 to 3406 (AAAKEKAAAAPATPAPASDSDAGNATATPAPADNNA) shows a compositional bias: low complexity. Residues 3550-3560 (NDKPKVTNTVN) are compositionally biased toward polar residues. The span at 3563–3605 (PPEPTTPPQTPPHTPPTTPGTPPPTTPDTPPAPKGDLPPAPTP) shows a compositional bias: pro residues. An LPXTG sorting signal motif is present at residues 3614 to 3618 (LPKTG). T3617 carries the pentaglycyl murein peptidoglycan amidated threonine modification. Positions 3618-3646 (GTSATMVNEVIIGMILVLMGLLLRRKPKH) are cleaved as a propeptide — removed by sortase.

It is found in the secreted. It localises to the cell wall. With respect to regulation, whole bacterial adhesion to Chinese hamster ovary cells expressing GPIIbIIIa is abrogated by integrin inhibitor RGDS and GPIIbIIIa inhibitor Abciximab. In terms of biological role, a cell wall protein involved with Hsa in host cell interactions required for colonization and pathogenesis. Involved in recognition of platelets. Interacts with human platelet integrin receptor GPIIbIIIa (a complex of ITGA2B and ITGB3). Involved in platelet spreading, presumably by activation of outside-in signaling leading to platelet activation and then spreading. Spreading also involves GPIIbIIIa. Binding to platelets under static conditions causes platelet dense granules to secrete ADP (similar to release induced by fibrinogen binding), has no effect on platelet alpha granule release. The N-terminal 656 aa residue fragment (called F2) also binds platelets, causes dense granule secretion and allows platelet spreading. Acts in concert with Hsa to promote binding to human fibronectin (FN1) and vitronectin (VTN), and biofilm formation. F2 bind activated platelets more strongly than unactivated platelets. Binding to both FN1 and VTN is mediated at least in part by their glycosylation. In Streptococcus gordonii (strain Challis / ATCC 35105 / BCRC 15272 / CH1 / DL1 / V288), this protein is Platelet adherence protein A.